A 106-amino-acid polypeptide reads, in one-letter code: Small ribosomal subunit protein bS16 (106 aa).

Residues 84–106 form a disordered region; that stretch reads KREARNNPEKAVPRKERKAADGK.

The chain is Small ribosomal subunit protein bS16 from Rhodopseudomonas palustris (strain ATCC BAA-98 / CGA009).